Reading from the N-terminus, the 328-residue chain is Cytochrome c biogenesis protein CcsA (328 aa).

The next 8 membrane-spanning stretches (helical) occupy residues 13–33 (ISFSVVSIVMTIYFLTLLVNL), 46–66 (GIIITFFSITGFLFTRWIFSG), 73–93 (LYESLIFLSWAFSIIHMISFF), 101–121 (LNAITAPSAIFIQGFATSGLL), 146–166 (MVLGYGALLCGSLLSIALLVI), 234–254 (IISLGFLFLTIGILSGAVWAN), 263–283 (WDPKETWAFITWTIFAIYLHI), and 295–315 (AIVASIGFLVIWICYFGVNLL).

The protein belongs to the CcmF/CycK/Ccl1/NrfE/CcsA family. As to quaternary structure, may interact with Ccs1.

It localises to the plastid. It is found in the chloroplast thylakoid membrane. Functionally, required during biogenesis of c-type cytochromes (cytochrome c6 and cytochrome f) at the step of heme attachment. This chain is Cytochrome c biogenesis protein CcsA, found in Aethionema grandiflorum (Persian stone-cress).